We begin with the raw amino-acid sequence, 1742 residues long: Meiosis regulator and mRNA stability factor 1 (1742 aa).

Position 65 is a phosphoserine (serine 65). The NYN domain occupies 351-488 (IGVFWDIENC…ALLHHANELI (138 aa)). Disordered regions lie at residues 620–642 (PSSAKAAPGKGSQANSGSATRNA) and 655–721 (SKTG…KEKE). The span at 631 to 642 (SQANSGSATRNA) shows a compositional bias: polar residues. The segment covering 673-689 (APPHRSSSAAAPAPKAP) has biased composition (low complexity). Residue tyrosine 696 is modified to Phosphotyrosine. Phosphoserine is present on serine 757. The RRM domain maps to 788 to 867 (VDVQISNLDY…KKILVSLATG (80 aa)). 2 HTH OST-type domains span residues 872–946 (SLSL…SPLG) and 1000–1077 (SLKT…HNKP). 2 positions are modified to phosphoserine: serine 1089 and serine 1091. HTH OST-type domains lie at 1097-1171 (QLIQ…LTHR), 1173-1247 (QVKR…CIPR), 1257-1332 (RTKQ…TEVE), 1333-1408 (RFKA…INRK), 1409-1484 (SLRA…CVKL), and 1486-1560 (SLYL…LKND). Serine 1571 carries the phosphoserine modification. The tract at residues 1678–1729 (IRNENLPPDPSSPGVSAAVPAPPSPSSETPESLLSKDPTESPAKKQPKNRVK) is disordered. A compositionally biased stretch (low complexity) spans 1703-1712 (SSETPESLLS).

In terms of assembly, interacts with LIMK2.

Its subcellular location is the peroxisome. Functionally, essential regulator of oogenesis required for female meiotic progression to repress transposable elements and preventing their mobilization, which is essential for the germline integrity. Probably acts via some RNA metabolic process, equivalent to the piRNA system in males, which mediates the repression of transposable elements during meiosis by forming complexes composed of RNAs and governs the methylation and subsequent repression of transposons. Also required to protect from DNA double-strand breaks. The protein is Meiosis regulator and mRNA stability factor 1 of Bos taurus (Bovine).